The sequence spans 901 residues: MLIKLLTKVFGSRNDRTLRRMRKVVNIINAMEPEMEKLSDEELKGKTAEFRARLEKGEVLENLIPEAFAVVREASKRVFGMRHFDVQLLGGMVLNERCIAEMRTGEGKTLTATLPAYLNALTGKGVHVVTVNDYLAQRDAENNRPLFEFLGLTVGINLPGMPAPAKREAYAADITYGTNNEYGFDYLRDNMAFSPEERVQRKLHYALVDEVDSILIDEARTPLIISGPAEDSSEMYKRVNKIIPHLIRQEKEDSETFQGEGHFSVDEKSRQVNLTERGLVLIEELLVKEGIMDEGESLYSPANIMLMHHVTAALRAHALFTRDVDYIVKDGEVIIVDEHTGRTMQGRRWSDGLHQAVEAKEGVQIQNENQTLASITFQNYFRLYEKLAGMTGTADTEAFEFSSIYKLDTVVVPTNRPMIRKDLPDLVYMTEAEKIQAIIEDIKERTAKGQPVLVGTISIEKSELVSNELTKAGIKHNVLNAKFHANEAAIVAQAGYPAAVTIATNMAGRGTDIVLGGSWQAEVAALENPTVEQIEKIKADWQVRHDAVLEAGGLHIIGTERHESRRIDNQLRGRSGRQGDAGSSRFYLSMEDALMRIFASDRVSGMMRKLGMKPGEAIEHPWVTKAIANAQRKVESRNFDIRKQLLEYDDVANDQRRAIYSQRNELLDVSDVSETINSIREDVFKATIDAYIPPQSLEEMWDIPGLQERLKNDFDLDLPIAEWLDKEPELHEETLRERILAQSIEVYQRKEEVVGAEMMRHFEKGVMLQTLDSLWKEHLAAMDYLRQGIHLRGYAQKDPKQEYKRESFSMFAAMLESLKYEVISTLSKVQVRMPEEVEELEQQRRMEAERLAQMQQLSHQDDDSAAAAALAAQTGERKVGRNDPCPCGSGKKYKQCHGRLQ.

Residues Q87, 105 to 109, and D512 contribute to the ATP site; that span reads GEGKT. The interval 859-901 is disordered; sequence HQDDDSAAAAALAAQTGERKVGRNDPCPCGSGKKYKQCHGRLQ. Positions 885, 887, 896, and 897 each coordinate Zn(2+). A compositionally biased stretch (basic residues) spans 891 to 901; that stretch reads KKYKQCHGRLQ.

Belongs to the SecA family. Monomer and homodimer. Part of the essential Sec protein translocation apparatus which comprises SecA, SecYEG and auxiliary proteins SecDF-YajC and YidC. Requires Zn(2+) as cofactor.

The protein localises to the cell inner membrane. The protein resides in the cytoplasm. It carries out the reaction ATP + H2O + cellular proteinSide 1 = ADP + phosphate + cellular proteinSide 2.. Part of the Sec protein translocase complex. Interacts with the SecYEG preprotein conducting channel. Has a central role in coupling the hydrolysis of ATP to the transfer of proteins into and across the cell membrane, serving both as a receptor for the preprotein-SecB complex and as an ATP-driven molecular motor driving the stepwise translocation of polypeptide chains across the membrane. The chain is Protein translocase subunit SecA from Escherichia coli O9:H4 (strain HS).